Here is a 103-residue protein sequence, read N- to C-terminus: Large ribosomal subunit protein bL21 (103 aa).

Belongs to the bacterial ribosomal protein bL21 family. Part of the 50S ribosomal subunit. Contacts protein L20.

In terms of biological role, this protein binds to 23S rRNA in the presence of protein L20. The sequence is that of Large ribosomal subunit protein bL21 from Shewanella sp. (strain MR-7).